A 286-amino-acid chain; its full sequence is Release factor glutamine methyltransferase (286 aa).

2 residues coordinate S-adenosyl-L-methionine: D148 and N194. Substrate is bound at residue N194 to Y197.

The protein belongs to the protein N5-glutamine methyltransferase family. PrmC subfamily.

It catalyses the reaction L-glutaminyl-[peptide chain release factor] + S-adenosyl-L-methionine = N(5)-methyl-L-glutaminyl-[peptide chain release factor] + S-adenosyl-L-homocysteine + H(+). In terms of biological role, methylates the class 1 translation termination release factors RF1/PrfA and RF2/PrfB on the glutamine residue of the universally conserved GGQ motif. The protein is Release factor glutamine methyltransferase of Leptospira interrogans serogroup Icterohaemorrhagiae serovar Lai (strain 56601).